Consider the following 329-residue polypeptide: D-lactate dehydrogenase (329 aa).

Residues 154-155 (KI), Asp174, 205-206 (CP), Asn211, 232-234 (TSR), and Asp258 contribute to the NAD(+) site. Residue Arg234 is part of the active site. Glu263 is an active-site residue. His295 functions as the Proton donor in the catalytic mechanism.

The protein belongs to the D-isomer specific 2-hydroxyacid dehydrogenase family.

It catalyses the reaction (R)-lactate + NAD(+) = pyruvate + NADH + H(+). In terms of biological role, fermentative lactate dehydrogenase. This chain is D-lactate dehydrogenase (ldhA), found in Escherichia coli (strain K12).